Reading from the N-terminus, the 727-residue chain is Probable metal-nicotianamine transporter YSL14 (727 aa).

2 stretches are compositionally biased toward low complexity: residues Met1 to Gly10 and Ala18 to Gly27. The segment at Met1–Ala61 is disordered. The segment covering Ala45–Gly54 has biased composition (gly residues). Helical transmembrane passes span Ala84–Leu104, Gly107–Trp127, Cys152–Met172, Leu194–Pro214, Leu256–Gly276, Ile314–Ile334, Val359–Ile379, Val432–Phe452, Ile460–Leu480, Leu492–Leu512, Phe546–Leu566, Pro604–Ile624, Phe646–Trp666, and Val681–Leu701.

Belongs to the YSL (TC 2.A.67.2) family. In terms of tissue distribution, expressed in leaves and at low levels in roots.

The protein resides in the membrane. Functionally, may be involved in the transport of nicotianamine-chelated metals. The sequence is that of Probable metal-nicotianamine transporter YSL14 (YSL14) from Oryza sativa subsp. japonica (Rice).